The chain runs to 483 residues: Aspartyl/glutamyl-tRNA(Asn/Gln) amidotransferase subunit B (483 aa).

Belongs to the GatB/GatE family. GatB subfamily. As to quaternary structure, heterotrimer of A, B and C subunits.

It carries out the reaction L-glutamyl-tRNA(Gln) + L-glutamine + ATP + H2O = L-glutaminyl-tRNA(Gln) + L-glutamate + ADP + phosphate + H(+). The catalysed reaction is L-aspartyl-tRNA(Asn) + L-glutamine + ATP + H2O = L-asparaginyl-tRNA(Asn) + L-glutamate + ADP + phosphate + 2 H(+). In terms of biological role, allows the formation of correctly charged Asn-tRNA(Asn) or Gln-tRNA(Gln) through the transamidation of misacylated Asp-tRNA(Asn) or Glu-tRNA(Gln) in organisms which lack either or both of asparaginyl-tRNA or glutaminyl-tRNA synthetases. The reaction takes place in the presence of glutamine and ATP through an activated phospho-Asp-tRNA(Asn) or phospho-Glu-tRNA(Gln). This chain is Aspartyl/glutamyl-tRNA(Asn/Gln) amidotransferase subunit B, found in Lachnospira eligens (strain ATCC 27750 / DSM 3376 / VPI C15-48 / C15-B4) (Eubacterium eligens).